The following is a 588-amino-acid chain: MNNSINHKFHHISRAEYQELLAVSRGDAVADYIIDNVSILDLINGGEISGPIVIKGRYIAGVGAEYTDAPALQRIDARGATAVPGFIDAHLHIESSMMTPVTFETATLPRGLTTVICDPHEIVNVMGEAGFAWFARCAEQARQNQYLQVSSCVPALEGCDVNGASFTLEQMLAWRDHPQVTGLAEMMDYPGVISGQNALLDKLDAFRHLTLDGHCPGLGGKELNAYIAAGIENCHESYQLEEGRRKLQLGMSLMIREGSAARNLNALATLINEFNSPQCMLCTDDRNPWEIAHEGHIDALIRRLIEQHNVPLHVAYRVASWSTARHFGLNHLGLLAPGKQADIVLLSDARKVTVQQVLVKGEPIDAQTLQAEESARLAQSAPPYGNTIDRQPVSASDFALQFTPGKRYRVIEAIHNELITHSRSSVYSENGFDRDDVCFIAVLERYGQRLAPACGLLGGFGLNEGALAATVSHDSHNIVVIGRSAEEMALAVNQVIQDGGGLCVVRNGQVQSHLPLPIAGLMSTDTAQSLAEQIDALKAAARECGPLPDEPFIQMAFLSLPVIPALKLTSQGLFDGEKFAFTTLEVTE.

This sequence belongs to the metallo-dependent hydrolases superfamily. Adenine deaminase family. Homodimer. It depends on Mn(2+) as a cofactor.

It catalyses the reaction adenine + H2O + H(+) = hypoxanthine + NH4(+). The protein is Adenine deaminase of Escherichia coli (strain SMS-3-5 / SECEC).